The following is a 389-amino-acid chain: Endonuclease 8-like 1 (389 aa).

Pro2 functions as the Schiff-base intermediate with DNA in the catalytic mechanism. Glu3 (proton donor) is an active-site residue. The active-site Proton donor; for beta-elimination activity is Lys54. Position 176 (Asn176) interacts with DNA. Residues 278-389 (TIWFQGDPGP…PREAGESSAS (112 aa)) are disordered. Positions 322 to 333 (SRMRRARKHPPK) are enriched in basic residues. A compositionally biased stretch (polar residues) spans 336–351 (AQQSEGAGLQQNQETP). Residues 357–373 (GKRRGQRASTGHRRRPK) are compositionally biased toward basic residues. Residues 374–389 (TIPDTRPREAGESSAS) show a composition bias toward basic and acidic residues.

This sequence belongs to the FPG family. Detected in heart, spleen and lung.

The protein resides in the cytoplasm. It localises to the cytoskeleton. The protein localises to the microtubule organizing center. It is found in the centrosome. Its subcellular location is the nucleus. The protein resides in the chromosome. The enzyme catalyses 2'-deoxyribonucleotide-(2'-deoxyribose 5'-phosphate)-2'-deoxyribonucleotide-DNA = a 3'-end 2'-deoxyribonucleotide-(2,3-dehydro-2,3-deoxyribose 5'-phosphate)-DNA + a 5'-end 5'-phospho-2'-deoxyribonucleoside-DNA + H(+). Involved in base excision repair of DNA damaged by oxidation or by mutagenic agents. Acts as a DNA glycosylase that recognizes and removes damaged bases. Has a preference for oxidized pyrimidines, such as thymine glycol, formamidopyrimidine (Fapy) and 5-hydroxyuracil. Has marginal activity towards 8-oxoguanine. Has AP (apurinic/apyrimidinic) lyase activity and introduces nicks in the DNA strand. Cleaves the DNA backbone by beta-delta elimination to generate a single-strand break at the site of the removed base with both 3'- and 5'-phosphates. Has DNA glycosylase/lyase activity towards mismatched uracil and thymine, in particular in U:C and T:C mismatches. Specifically binds 5-hydroxymethylcytosine (5hmC), suggesting that it acts as a specific reader of 5hmC. The polypeptide is Endonuclease 8-like 1 (Neil1) (Mus musculus (Mouse)).